The chain runs to 246 residues: Acetoacetate decarboxylase (246 aa).

Lys116 functions as the Schiff-base intermediate with acetoacetate in the catalytic mechanism.

This sequence belongs to the ADC family.

It catalyses the reaction acetoacetate + H(+) = acetone + CO2. Catalyzes the conversion of acetoacetate to acetone and carbon dioxide. The sequence is that of Acetoacetate decarboxylase from Burkholderia multivorans (strain ATCC 17616 / 249).